Here is a 1034-residue protein sequence, read N- to C-terminus: Phosphoenolpyruvate carboxylase (1034 aa).

Active-site residues include His-203 and Lys-680.

Belongs to the PEPCase type 1 family. The cofactor is Mg(2+).

The catalysed reaction is oxaloacetate + phosphate = phosphoenolpyruvate + hydrogencarbonate. In terms of biological role, forms oxaloacetate, a four-carbon dicarboxylic acid source for the tricarboxylic acid cycle. This chain is Phosphoenolpyruvate carboxylase (ppc), found in Synechocystis sp. (strain ATCC 27184 / PCC 6803 / Kazusa).